Reading from the N-terminus, the 237-residue chain is DNA repair protein RecO (237 aa).

It belongs to the RecO family.

Its function is as follows. Involved in DNA repair and RecF pathway recombination. This is DNA repair protein RecO from Rickettsia africae (strain ESF-5).